The chain runs to 246 residues: MHPEKLQAYVLSTLDYGDSDRIVALFTLEHGRIKAFARRARNSRRRFGAALEIFARIEAHVEIKQGGLSGLRQAEIDCIYPGIRGDLGRIAYALYACELVDAMTPEGHPLPRLFRLLAAYLDRLEAYPASEQERRFFEINLLNILGYRPSLEACSRCGTPFDDRGALLLDDGELVCRACTGHGRDMTQVTLGRMLACLKTGTFGLIHFPDEAQAQTGSALDRALAFHAGHRLKSLEFLRQISNENQ.

This sequence belongs to the RecO family.

Involved in DNA repair and RecF pathway recombination. The chain is DNA repair protein RecO from Pelobacter propionicus (strain DSM 2379 / NBRC 103807 / OttBd1).